The sequence spans 261 residues: tRNA U34 carboxymethyltransferase (261 aa).

Residues K25, W39, K44, G63, 114-115 (VE), Y135, and R250 each bind carboxy-S-adenosyl-L-methionine.

The protein belongs to the class I-like SAM-binding methyltransferase superfamily. CmoB family. In terms of assembly, homotetramer.

It carries out the reaction carboxy-S-adenosyl-L-methionine + 5-hydroxyuridine(34) in tRNA = 5-carboxymethoxyuridine(34) in tRNA + S-adenosyl-L-homocysteine + H(+). Its function is as follows. Catalyzes carboxymethyl transfer from carboxy-S-adenosyl-L-methionine (Cx-SAM) to 5-hydroxyuridine (ho5U) to form 5-carboxymethoxyuridine (cmo5U) at position 34 in tRNAs. In Helicobacter pylori (strain Shi470), this protein is tRNA U34 carboxymethyltransferase.